Consider the following 326-residue polypeptide: Vitamin B12 import system permease protein BtuC (326 aa).

9 consecutive transmembrane segments (helical) span residues 15-35 (WLLCLSVLMLLALLLSLCAGE), 61-81 (LAVLLVGAALAISGAVMQALF), 88-108 (PGLLGVSNGAGVGLIAAVLLG), 112-132 (LPNWALGLCAIAGALIITLIL), 146-166 (LLAGVALGIICSALMTWAIYF), 184-204 (GGVDWRQSWLMLALIPVLLWI), 240-260 (GWMVGVSVALAGAIGFIGLVI), 274-294 (VLLPGCALAGASAVLLADIVA), and 302-322 (ELPIGVVTATLGAPVFIWLLL).

The protein belongs to the binding-protein-dependent transport system permease family. FecCD subfamily. As to quaternary structure, the complex is composed of two ATP-binding proteins (BtuD), two transmembrane proteins (BtuC) and a solute-binding protein (BtuF).

It is found in the cell inner membrane. Its function is as follows. Part of the ABC transporter complex BtuCDF involved in vitamin B12 import. Involved in the translocation of the substrate across the membrane. The protein is Vitamin B12 import system permease protein BtuC of Shigella sonnei (strain Ss046).